Consider the following 60-residue polypeptide: Large ribosomal subunit protein uL30 (60 aa).

This sequence belongs to the universal ribosomal protein uL30 family. Part of the 50S ribosomal subunit.

The chain is Large ribosomal subunit protein uL30 from Polaromonas sp. (strain JS666 / ATCC BAA-500).